Here is a 60-residue protein sequence, read N- to C-terminus: MDPCDCSKSGTCNCGGSCTCTNCSCTTCKKSCCPCCPSGCTKCASGCVCKGKTCDTSCCQ.

The segment at 1-28 is beta; it reads MDPCDCSKSGTCNCGGSCTCTNCSCTTC. Cysteine 4, cysteine 6, cysteine 12, cysteine 14, cysteine 18, cysteine 20, cysteine 23, cysteine 25, cysteine 28, cysteine 32, cysteine 33, cysteine 35, cysteine 36, cysteine 40, cysteine 43, cysteine 47, cysteine 49, cysteine 54, cysteine 58, and cysteine 59 together coordinate a divalent metal cation. The segment at 29 to 60 is alpha; it reads KKSCCPCCPSGCTKCASGCVCKGKTCDTSCCQ.

It belongs to the metallothionein superfamily. Type 1 family.

Metallothioneins have a high content of cysteine residues that bind various heavy metals. The protein is Metallothionein B (mtb) of Dicentrarchus labrax (European seabass).